Here is a 348-residue protein sequence, read N- to C-terminus: Phospho-2-dehydro-3-deoxyheptonate aldolase, Trp-sensitive (348 aa).

It belongs to the class-I DAHP synthase family.

The enzyme catalyses D-erythrose 4-phosphate + phosphoenolpyruvate + H2O = 7-phospho-2-dehydro-3-deoxy-D-arabino-heptonate + phosphate. It functions in the pathway metabolic intermediate biosynthesis; chorismate biosynthesis; chorismate from D-erythrose 4-phosphate and phosphoenolpyruvate: step 1/7. Functionally, stereospecific condensation of phosphoenolpyruvate (PEP) and D-erythrose-4-phosphate (E4P) giving rise to 3-deoxy-D-arabino-heptulosonate-7-phosphate (DAHP). The polypeptide is Phospho-2-dehydro-3-deoxyheptonate aldolase, Trp-sensitive (aroH) (Buchnera aphidicola subsp. Schizaphis graminum (strain Sg)).